The following is a 234-amino-acid chain: MQFYNSLIEGILVKRYKRFLTDVTLLNGEEVVAHCPNTGAMIGCAEPGMQVWLSPSNNPKRKLGYTWELGVTHQGHWIGINTNNANKIVAEALATHAIQELQGYETVRPEVRFGHENSRIDFLLSSSDKKDCYVEVKSVTLLEEGQGYFPDAKTVRGQKHLRELAAMVEQGYRAVLLFCVQHSGIQSVKIAEHIDPKYAQMFKHAVDVGVEVLAYSCAINEQNITLNQRLPMIV.

Belongs to the SfsA family.

This is Sugar fermentation stimulation protein homolog from Pseudoalteromonas atlantica (strain T6c / ATCC BAA-1087).